The chain runs to 421 residues: Medium-chain specific acyl-CoA dehydrogenase, mitochondrial (421 aa).

The N-terminal 25 residues, 1-25 (MAAGFGRCCRVLRSISRFQWRSQHT), are a transit peptide targeting the mitochondrion. Residue Lys69 is modified to N6-acetyllysine; alternate. The residue at position 69 (Lys69) is an N6-succinyllysine; alternate. 158-167 (YCVTEPGAGS) contributes to the FAD binding site. Ser167 is an octanoyl-CoA binding site. Lys179 is modified (N6-succinyllysine). 191–193 (WIT) is a binding site for FAD. Residues Lys212, Lys217, and Lys271 each carry the N6-acetyllysine; alternate modification. N6-succinyllysine; alternate occurs at positions 212, 217, and 271. Asp278 contributes to the octanoyl-CoA binding site. Lys279 carries the post-translational modification N6-acetyllysine. An octanoyl-CoA-binding site is contributed by Arg281. Lys301 carries the N6-acetyllysine modification. FAD contacts are provided by residues 306–308 (RKT) and 316–317 (HQ). Arg349 and Thr351 together coordinate octanoyl-CoA. Thr351 bears the Phosphothreonine mark. 374-378 (QILGG) lines the FAD pocket. Glu401 is an octanoyl-CoA binding site. Glu401 (proton acceptor) is an active-site residue. 402–405 (GTSQ) provides a ligand contact to FAD.

This sequence belongs to the acyl-CoA dehydrogenase family. In terms of assembly, homotetramer. Interacts with the heterodimeric electron transfer flavoprotein ETF. It depends on FAD as a cofactor. Acetylated. Could occur at proximity of the cofactor-binding sites and reduce the catalytic activity. Could be deacetylated by SIRT3.

Its subcellular location is the mitochondrion matrix. It catalyses the reaction a medium-chain 2,3-saturated fatty acyl-CoA + oxidized [electron-transfer flavoprotein] + H(+) = a medium-chain (2E)-enoyl-CoA + reduced [electron-transfer flavoprotein]. The enzyme catalyses pentanoyl-CoA + oxidized [electron-transfer flavoprotein] + H(+) = (2E)-pentenoyl-CoA + reduced [electron-transfer flavoprotein]. The catalysed reaction is hexanoyl-CoA + oxidized [electron-transfer flavoprotein] + H(+) = (2E)-hexenoyl-CoA + reduced [electron-transfer flavoprotein]. It carries out the reaction octanoyl-CoA + oxidized [electron-transfer flavoprotein] + H(+) = (2E)-octenoyl-CoA + reduced [electron-transfer flavoprotein]. It catalyses the reaction decanoyl-CoA + oxidized [electron-transfer flavoprotein] + H(+) = (2E)-decenoyl-CoA + reduced [electron-transfer flavoprotein]. The enzyme catalyses dodecanoyl-CoA + oxidized [electron-transfer flavoprotein] + H(+) = (2E)-dodecenoyl-CoA + reduced [electron-transfer flavoprotein]. The catalysed reaction is tetradecanoyl-CoA + oxidized [electron-transfer flavoprotein] + H(+) = (2E)-tetradecenoyl-CoA + reduced [electron-transfer flavoprotein]. It carries out the reaction oxidized [electron-transfer flavoprotein] + hexadecanoyl-CoA + H(+) = (2E)-hexadecenoyl-CoA + reduced [electron-transfer flavoprotein]. The protein operates within lipid metabolism; mitochondrial fatty acid beta-oxidation. Functionally, medium-chain specific acyl-CoA dehydrogenase is one of the acyl-CoA dehydrogenases that catalyze the first step of mitochondrial fatty acid beta-oxidation, an aerobic process breaking down fatty acids into acetyl-CoA and allowing the production of energy from fats. The first step of fatty acid beta-oxidation consists in the removal of one hydrogen from C-2 and C-3 of the straight-chain fatty acyl-CoA thioester, resulting in the formation of trans-2-enoyl-CoA. Electron transfer flavoprotein (ETF) is the electron acceptor that transfers electrons to the main mitochondrial respiratory chain via ETF-ubiquinone oxidoreductase (ETF dehydrogenase). Among the different mitochondrial acyl-CoA dehydrogenases, medium-chain specific acyl-CoA dehydrogenase acts specifically on acyl-CoAs with saturated 6 to 12 carbons long primary chains. The chain is Medium-chain specific acyl-CoA dehydrogenase, mitochondrial from Pan troglodytes (Chimpanzee).